The primary structure comprises 144 residues: Large ribosomal subunit protein uL15 (144 aa).

A disordered region spans residues 1–44 (MNLNELQPAAGSRHVRNRVGRGTSSGNGKTSGRGQKGQKARGKV). The segment covering 23-35 (TSSGNGKTSGRGQ) has biased composition (gly residues).

Belongs to the universal ribosomal protein uL15 family. Part of the 50S ribosomal subunit.

Its function is as follows. Binds to the 23S rRNA. The protein is Large ribosomal subunit protein uL15 of Leuconostoc mesenteroides subsp. mesenteroides (strain ATCC 8293 / DSM 20343 / BCRC 11652 / CCM 1803 / JCM 6124 / NCDO 523 / NBRC 100496 / NCIMB 8023 / NCTC 12954 / NRRL B-1118 / 37Y).